The following is a 964-amino-acid chain: Probable LRR receptor-like serine/threonine-protein kinase IRK (964 aa).

Positions 1–20 (MYKALIFTVLLVSAVAPVRS) are cleaved as a signal peptide. Residues 21-603 (LDPPLNDDVL…GHKRILLSIS (583 aa)) are Extracellular-facing. LRR repeat units follow at residues 92 to 116 (LQFLHKLSLSNNNLTGIINPNMLLS), 117 to 141 (LVNLKVVDLSSNGLSGSLPDEFFRQ), 143 to 166 (GSLRVLSLAKNKLTGKIPVSISSC), 168 to 190 (SLAALNLSSNGFSGSMPLGIWSL), 191 to 214 (NTLRSLDLSRNELEGEFPEKIDRL), 215 to 238 (NNLRALDLSRNRLSGPIPSEIGSC), 240 to 261 (LLKTIDLSENSLSGSLPNTFQQ), 263 to 286 (SLCYSLNLGKNALEGEVPKWIGEM), 287 to 310 (RSLETLDLSMNKFSGQVPDSIGNL), 312 to 334 (ALKVLNFSGNGLIGSLPVSTANC), and 335 to 358 (INLLALDLSGNSLTGKLPMWLFQD). A glycan (N-linked (GlcNAc...) asparagine) is linked at N104. An N-linked (GlcNAc...) asparagine glycan is attached at N173. N-linked (GlcNAc...) asparagine glycosylation is present at N317. Residue N370 is glycosylated (N-linked (GlcNAc...) asparagine). LRR repeat units lie at residues 375 to 399 (IKKIQVLDLSHNAFSGEIGAGLGDL), 400 to 423 (RDLEGLHLSRNSLTGPIPSTIGEL), 425 to 447 (HLSVLDVSHNQLNGMIPRETGGA), 448 to 471 (VSLEELRLENNLLEGNIPSSIKNC), 472 to 495 (SSLRSLILSHNKLLGSIPPELAKL), 496 to 519 (TRLEEVDLSFNELAGTLPKQLANL), and 521 to 544 (YLHTFNISHNHLFGELPAGGIFNG). N-linked (GlcNAc...) asparagine glycosylation is present at N470. N-linked (GlcNAc...) asparagine glycans are attached at residues N526, N562, and N578. A helical transmembrane segment spans residues 604 to 624 (SLIAISAAAAIVVGVIAITVL). At 625–964 (NLRVRASTVS…SGSSDELGSS (340 aa)) the chain is on the cytoplasmic side. The Protein kinase domain occupies 678 to 951 (LNKDCELGRG…GEAVNILRMI (274 aa)). ATP-binding positions include 684–692 (LGRGGFGAV) and K706.

It belongs to the protein kinase superfamily. Ser/Thr protein kinase family. Interacts with IRKI. In terms of processing, autophosphorylated. Highly expressed in root tips, shoot apices and developing flowers.

It localises to the cell membrane. The catalysed reaction is L-seryl-[protein] + ATP = O-phospho-L-seryl-[protein] + ADP + H(+). The enzyme catalyses L-threonyl-[protein] + ATP = O-phospho-L-threonyl-[protein] + ADP + H(+). This Arabidopsis thaliana (Mouse-ear cress) protein is Probable LRR receptor-like serine/threonine-protein kinase IRK.